The sequence spans 270 residues: Glutamate racemase (270 aa).

Residues 10–11 (DS) and 42–43 (YG) each bind substrate. Cysteine 74 serves as the catalytic Proton donor/acceptor. 75–76 (NT) serves as a coordination point for substrate. Residue cysteine 189 is the Proton donor/acceptor of the active site. Residue 190-191 (TH) participates in substrate binding.

This sequence belongs to the aspartate/glutamate racemases family.

It carries out the reaction L-glutamate = D-glutamate. Its pathway is cell wall biogenesis; peptidoglycan biosynthesis. Its function is as follows. Provides the (R)-glutamate required for cell wall biosynthesis. The polypeptide is Glutamate racemase (Bartonella quintana (strain Toulouse) (Rochalimaea quintana)).